The primary structure comprises 729 residues: Polyribonucleotide nucleotidyltransferase (729 aa).

The Mg(2+) site is built by D485 and D491. Positions P552 to I611 constitute a KH domain. In terms of domain architecture, S1 motif spans G621–K689. A disordered region spans residues T710 to E729.

The protein belongs to the polyribonucleotide nucleotidyltransferase family. As to quaternary structure, component of the RNA degradosome, which is a multiprotein complex involved in RNA processing and mRNA degradation. Mg(2+) is required as a cofactor.

It localises to the cytoplasm. It catalyses the reaction RNA(n+1) + phosphate = RNA(n) + a ribonucleoside 5'-diphosphate. Its function is as follows. Involved in mRNA degradation. Catalyzes the phosphorolysis of single-stranded polyribonucleotides processively in the 3'- to 5'-direction. This Legionella pneumophila (strain Paris) protein is Polyribonucleotide nucleotidyltransferase.